Here is a 491-residue protein sequence, read N- to C-terminus: Endoglucanase 14 (491 aa).

Positions 1–31 (MSQLKIGSSQCLWTSICIVLFVLSMARGAVS) are cleaved as a signal peptide. Asp86 serves as the catalytic Nucleophile. Asn397 is a glycosylation site (N-linked (GlcNAc...) asparagine). Active-site residues include His413, Asp465, and Glu474.

It belongs to the glycosyl hydrolase 9 (cellulase E) family.

It localises to the secreted. It carries out the reaction Endohydrolysis of (1-&gt;4)-beta-D-glucosidic linkages in cellulose, lichenin and cereal beta-D-glucans.. This Arabidopsis thaliana (Mouse-ear cress) protein is Endoglucanase 14.